A 156-amino-acid polypeptide reads, in one-letter code: Regulatory protein RecX (156 aa).

This sequence belongs to the RecX family.

It is found in the cytoplasm. Its function is as follows. Modulates RecA activity. This chain is Regulatory protein RecX, found in Pseudomonas putida (strain GB-1).